We begin with the raw amino-acid sequence, 99 residues long: Ferredoxin-2 (99 aa).

The region spanning 4–96 (YQVRLINKKR…DCTIRTHQEA (93 aa)) is the 2Fe-2S ferredoxin-type domain. [2Fe-2S] cluster contacts are provided by Cys-42, Cys-47, Cys-50, and Cys-80.

It belongs to the 2Fe2S plant-type ferredoxin family. [2Fe-2S] cluster is required as a cofactor.

In terms of biological role, ferredoxins are iron-sulfur proteins that transfer electrons in a wide variety of metabolic reactions. Donates electrons to the nitrogenase. The chain is Ferredoxin-2 (fdxH) from Leptolyngbya boryana (Plectonema boryanum).